A 379-amino-acid polypeptide reads, in one-letter code: uncharacterized protein (379 aa).

Disordered regions lie at residues 1-20 (MLPQ…PVGP), 227-290 (VSQR…LQGH), and 331-371 (PGCA…RAGH). Residues 7–20 (QVVHGVQDGPPVGP) show a composition bias toward low complexity. Basic and acidic residues predominate over residues 249-261 (GCKDPRVRKEPGR).

This is an uncharacterized protein from Dryophytes versicolor (chameleon treefrog).